Here is a 172-residue protein sequence, read N- to C-terminus: Putative F-box protein At3g13825 (172 aa).

Positions 1–51 (MTTLSNLSVDLVGEIFSRVPLISLSEVRCTCTTWNTLSWNILSENYVFGKA) constitute an F-box domain.

This Arabidopsis thaliana (Mouse-ear cress) protein is Putative F-box protein At3g13825.